The sequence spans 451 residues: Bifunctional protein GlmU (451 aa).

The tract at residues 1–217 (MKTLILAAGL…IDEVTGVNDR (217 aa)) is pyrophosphorylase. Residues 6 to 9 (LAAG), K20, Q68, 73 to 74 (GT), 95 to 97 (YGD), G134, E146, N161, and N215 contribute to the UDP-N-acetyl-alpha-D-glucosamine site. D97 lines the Mg(2+) pocket. N215 serves as a coordination point for Mg(2+). The segment at 218 to 238 (IQLSKLEKNMRKRINEKLMRE) is linker. Positions 239 to 451 (GVRIIDPESV…GGNQNADSKE (213 aa)) are N-acetyltransferase. UDP-N-acetyl-alpha-D-glucosamine-binding residues include R320 and K338. H350 functions as the Proton acceptor in the catalytic mechanism. 2 residues coordinate UDP-N-acetyl-alpha-D-glucosamine: Y353 and N364. Residues A367, 373–374 (NY), S392, A410, and R427 each bind acetyl-CoA.

In the N-terminal section; belongs to the N-acetylglucosamine-1-phosphate uridyltransferase family. This sequence in the C-terminal section; belongs to the transferase hexapeptide repeat family. In terms of assembly, homotrimer. It depends on Mg(2+) as a cofactor.

It is found in the cytoplasm. It catalyses the reaction alpha-D-glucosamine 1-phosphate + acetyl-CoA = N-acetyl-alpha-D-glucosamine 1-phosphate + CoA + H(+). The enzyme catalyses N-acetyl-alpha-D-glucosamine 1-phosphate + UTP + H(+) = UDP-N-acetyl-alpha-D-glucosamine + diphosphate. It functions in the pathway nucleotide-sugar biosynthesis; UDP-N-acetyl-alpha-D-glucosamine biosynthesis; N-acetyl-alpha-D-glucosamine 1-phosphate from alpha-D-glucosamine 6-phosphate (route II): step 2/2. It participates in nucleotide-sugar biosynthesis; UDP-N-acetyl-alpha-D-glucosamine biosynthesis; UDP-N-acetyl-alpha-D-glucosamine from N-acetyl-alpha-D-glucosamine 1-phosphate: step 1/1. Its pathway is bacterial outer membrane biogenesis; LPS lipid A biosynthesis. Catalyzes the last two sequential reactions in the de novo biosynthetic pathway for UDP-N-acetylglucosamine (UDP-GlcNAc). The C-terminal domain catalyzes the transfer of acetyl group from acetyl coenzyme A to glucosamine-1-phosphate (GlcN-1-P) to produce N-acetylglucosamine-1-phosphate (GlcNAc-1-P), which is converted into UDP-GlcNAc by the transfer of uridine 5-monophosphate (from uridine 5-triphosphate), a reaction catalyzed by the N-terminal domain. The protein is Bifunctional protein GlmU of Thermosipho africanus (strain TCF52B).